Here is a 228-residue protein sequence, read N- to C-terminus: Cytidylate kinase (228 aa).

ATP is bound at residue 17 to 25; it reads GPTASGKGT.

The protein belongs to the cytidylate kinase family. Type 1 subfamily.

It localises to the cytoplasm. The enzyme catalyses CMP + ATP = CDP + ADP. It catalyses the reaction dCMP + ATP = dCDP + ADP. In Burkholderia vietnamiensis (strain G4 / LMG 22486) (Burkholderia cepacia (strain R1808)), this protein is Cytidylate kinase.